Consider the following 434-residue polypeptide: GPI-anchor transamidase component PIGU (434 aa).

Residues 1–3 lie on the Cytoplasmic side of the membrane; it reads MAA. Residues 4–22 form a helical membrane-spanning segment; it reads PLALVLVVAVTVRAALFRS. Residues 23 to 78 lie on the Lumenal side of the membrane; the sequence is SLAEFISERVEVVSPLSSWKRVVEGLALLDLGVSPYSGAVFHETPLIIYLFHFLID. A helical transmembrane segment spans residues 79–99; it reads YAELVFMITDALTAIALYFAI. The Cytoplasmic segment spans residues 100–136; it reads QDFNKVVFKKQKLLLELDQYAPDVAELIRTPMEMRYI. 4 helical membrane-spanning segments follow: residues 137–157, 158–177, 178–193, and 194–204; these read PLKV…VAKS, TCAI…IKGS, VFLS…YQSL, and YPVTLFAPGLL. At 205 to 221 the chain is on the cytoplasmic side; it reads YLLQRQYIPVKVKSKAF. Lys215 contacts a cardiolipin. The chain crosses the membrane as a helical span at residues 222-243; that stretch reads WIFSWEYAMMYTGSLVVIVCLS. The Lumenal portion of the chain corresponds to 244 to 285; the sequence is FFLLSSWDFIPAVYGFILSVPDLTPNIGLFWYFFAEMFEHFS. The helical transmembrane segment at 286 to 305 threads the bilayer; that stretch reads LFFVCVFQINVFFYTVPLAI. Over 306 to 310 the chain is Cytoplasmic; that stretch reads KLKEH. Lys308 serves as a coordination point for a cardiolipin. 2 helical membrane passes run 311–330 and 331–344; these read PIFF…SYPT and VGDV…FPVW. Residues 345–353 are Cytoplasmic-facing; that stretch reads NHLYRFLRN. A helical transmembrane segment spans residues 354-371; that stretch reads IFVLTCIIIVCSLLFPVL. At 372–383 the chain is on the lumenal side; the sequence is WHLWIYAGSANS. Residues Asn382 and Asn384 each coordinate a 2-acyl-6-[6-phosphoethanolamine-alpha-D-mannosyl-(1-&gt;2)-6-phosphoethanolamine-alpha-D-mannosyl-(1-&gt;6)-2-phosphoethanolamine-alpha-D-mannosyl-(1-&gt;4)-alpha-D-glucosaminyl]-1-(1-radyl,2-acyl-sn-glycero-3-phospho)-1D-myo-inositol. A helical membrane pass occupies residues 384-405; that stretch reads NFFYAITLTFNVGQILLISDYF. Residues 406–434 lie on the Cytoplasmic side of the membrane; that stretch reads YAFLRREYYLTHGLYLTAKDGTEAMLVLK.

It belongs to the PIGU family. Heteropentamer. Part of the GPI-anchor transamidase complex, consisting of PIGK, PIGT, PIGS, PIGU and GAA1.

The protein resides in the endoplasmic reticulum membrane. Its pathway is glycolipid biosynthesis; glycosylphosphatidylinositol-anchor biosynthesis. Functionally, component of the glycosylphosphatidylinositol-anchor (GPI-anchor) transamidase (GPI-T) complex that catalyzes the formation of the linkage between a proprotein and a GPI-anchor and participates in GPI anchored protein biosynthesis. Binds the lipid portion of GPI-anchor. May act as an organizer in the transmembrane layer to recruit other subunits, and thus is essential for assembly of the complex. The chain is GPI-anchor transamidase component PIGU from Mus musculus (Mouse).